The following is a 242-amino-acid chain: Proteasome subunit alpha (242 aa).

It belongs to the peptidase T1A family. In terms of assembly, the 20S proteasome core is composed of 14 alpha and 14 beta subunits that assemble into four stacked heptameric rings, resulting in a barrel-shaped structure. The two inner rings, each composed of seven catalytic beta subunits, are sandwiched by two outer rings, each composed of seven alpha subunits. The catalytic chamber with the active sites is on the inside of the barrel. Has a gated structure, the ends of the cylinder being occluded by the N-termini of the alpha-subunits. Is capped by the proteasome-associated ATPase, ARC.

It localises to the cytoplasm. It functions in the pathway protein degradation; proteasomal Pup-dependent pathway. Its activity is regulated as follows. The formation of the proteasomal ATPase ARC-20S proteasome complex, likely via the docking of the C-termini of ARC into the intersubunit pockets in the alpha-rings, may trigger opening of the gate for substrate entry. Interconversion between the open-gate and close-gate conformations leads to a dynamic regulation of the 20S proteasome proteolysis activity. Its function is as follows. Component of the proteasome core, a large protease complex with broad specificity involved in protein degradation. This chain is Proteasome subunit alpha, found in Renibacterium salmoninarum (strain ATCC 33209 / DSM 20767 / JCM 11484 / NBRC 15589 / NCIMB 2235).